The chain runs to 938 residues: Microperfuranone synthase (938 aa).

The interval threonine 44–valine 445 is adenylation (A) domain. In terms of domain architecture, Carrier spans serine 579–arginine 655. The thiolation and peptide carrier (T) domain stretch occupies residues serine 581 to aspartate 652. Position 613 is an O-(pantetheine 4'-phosphoryl)serine (serine 613). Residues proline 676–alanine 923 are thioesterase (TE) domain. Serine 746 is a catalytic residue.

The protein belongs to the ATP-dependent AMP-binding enzyme family.

The protein operates within secondary metabolite biosynthesis. Its function is as follows. Microperfuranone synthase is the only protein required for the biosynthesis of the secondary metabolite microperfuranone from phenylpyruvic acid (PPA). Several steps for the microperfuranione biosynthesis have been proposed. These steps include the activation of PPA, by the micA adenylation (A) domain to AMP-phenylpyruvic acid followed by loading of the PPA unit to the thiolation and peptide carrier (T) domain and eventually transferring to the thioesterase (TE) domain. After loading another PPA unit onto the T domain, aldol condensation establishes the carbon-carbon bond between the alpha- and beta-carbon of the two PPA units. Sulfur-assisted furan ring formation, TE domain mediated hydrolysis, decarboxylation, and keto-enol tautomerization would generate microperfuranone attached to the T domain. Finally, microperfuranone is released by the TE domain. This Emericella nidulans (strain FGSC A4 / ATCC 38163 / CBS 112.46 / NRRL 194 / M139) (Aspergillus nidulans) protein is Microperfuranone synthase.